Here is a 270-residue protein sequence, read N- to C-terminus: Formamidopyrimidine-DNA glycosylase (270 aa).

Pro2 (schiff-base intermediate with DNA) is an active-site residue. Glu3 acts as the Proton donor in catalysis. Lys58 acts as the Proton donor; for beta-elimination activity in catalysis. His91, Arg110, and Arg151 together coordinate DNA. The FPG-type zinc-finger motif lies at 236–270 (FVYGRGGQPCKVCGTELREVKLGQRASVFCPKCQR). Arg260 serves as the catalytic Proton donor; for delta-elimination activity.

Belongs to the FPG family. In terms of assembly, monomer. Zn(2+) serves as cofactor.

The enzyme catalyses Hydrolysis of DNA containing ring-opened 7-methylguanine residues, releasing 2,6-diamino-4-hydroxy-5-(N-methyl)formamidopyrimidine.. The catalysed reaction is 2'-deoxyribonucleotide-(2'-deoxyribose 5'-phosphate)-2'-deoxyribonucleotide-DNA = a 3'-end 2'-deoxyribonucleotide-(2,3-dehydro-2,3-deoxyribose 5'-phosphate)-DNA + a 5'-end 5'-phospho-2'-deoxyribonucleoside-DNA + H(+). In terms of biological role, involved in base excision repair of DNA damaged by oxidation or by mutagenic agents. Acts as a DNA glycosylase that recognizes and removes damaged bases. Has a preference for oxidized purines, such as 7,8-dihydro-8-oxoguanine (8-oxoG). Has AP (apurinic/apyrimidinic) lyase activity and introduces nicks in the DNA strand. Cleaves the DNA backbone by beta-delta elimination to generate a single-strand break at the site of the removed base with both 3'- and 5'-phosphates. The protein is Formamidopyrimidine-DNA glycosylase of Pseudomonas entomophila (strain L48).